The chain runs to 374 residues: 2,7-anhydro-N-acetylneuraminate hydratase (374 aa).

NAD(+)-binding residues include Tyr13, Phe14, Asp35, Asn38, Thr70, Asn72, His75, Glu92, Lys93, Trp162, and Lys163.

Belongs to the Gfo/Idh/MocA family. Homodimer. It depends on NAD(+) as a cofactor.

It carries out the reaction N-acetyl-2,7-anhydro-alpha-neuraminate + H2O = N-acetyl-alpha-neuraminate. With respect to regulation, neu5Ac is produced in the presence of NAD(+) or NADH, but not in the presence of FAD. In terms of biological role, hydratase involved in the degradation of sialic acids, which are present in the host mucus layer and represent a much-coveted source of nutrients for R.gnavus, a prevalent member of the normal gut microbiota. Catalyzes the reversible conversion of the dehydrated form of N-acetylneuraminate (Neu5Ac), 2,7-anhydro-N-acetylneuraminate (2,7-AN), to Neu5Ac, allowing growth on 2,7-AN produced by the IT-sialidase NanH. Acts through a multistep mechanism involving a keto intermediate and cycling of NADH/NAD(+). The chain is 2,7-anhydro-N-acetylneuraminate hydratase from Mediterraneibacter gnavus (strain ATCC 29149 / DSM 114966 / JCM 6515 / VPI C7-9) (Ruminococcus gnavus).